We begin with the raw amino-acid sequence, 233 residues long: Biosynthetic peptidoglycan transglycosylase (233 aa).

The helical transmembrane segment at 8–28 threads the bilayer; it reads LIALPVGIFIFFNAYVYGNII.

It belongs to the glycosyltransferase 51 family.

The protein resides in the cell inner membrane. It catalyses the reaction [GlcNAc-(1-&gt;4)-Mur2Ac(oyl-L-Ala-gamma-D-Glu-L-Lys-D-Ala-D-Ala)](n)-di-trans,octa-cis-undecaprenyl diphosphate + beta-D-GlcNAc-(1-&gt;4)-Mur2Ac(oyl-L-Ala-gamma-D-Glu-L-Lys-D-Ala-D-Ala)-di-trans,octa-cis-undecaprenyl diphosphate = [GlcNAc-(1-&gt;4)-Mur2Ac(oyl-L-Ala-gamma-D-Glu-L-Lys-D-Ala-D-Ala)](n+1)-di-trans,octa-cis-undecaprenyl diphosphate + di-trans,octa-cis-undecaprenyl diphosphate + H(+). It participates in cell wall biogenesis; peptidoglycan biosynthesis. Its function is as follows. Peptidoglycan polymerase that catalyzes glycan chain elongation from lipid-linked precursors. This is Biosynthetic peptidoglycan transglycosylase from Neisseria gonorrhoeae (strain NCCP11945).